The primary structure comprises 135 residues: Large ribosomal subunit protein uL16c (135 aa).

It belongs to the universal ribosomal protein uL16 family. As to quaternary structure, part of the 50S ribosomal subunit.

It localises to the plastid. The protein localises to the chloroplast. The chain is Large ribosomal subunit protein uL16c from Aethionema cordifolium (Lebanon stonecress).